A 108-amino-acid chain; its full sequence is uncharacterized protein (108 aa).

Residues 72-94 (LGLHTSVFFFLRIVCMSSAASVF) form a helical membrane-spanning segment.

It is found in the membrane. This is an uncharacterized protein from Saccharomyces cerevisiae (strain ATCC 204508 / S288c) (Baker's yeast).